The chain runs to 1142 residues: Protein kinase C-like (1142 aa).

An REM-1 1 domain is found at 1 to 67 (MNDEDKVHDI…LRELQMRRLG (67 aa)). Residues 70–139 (VDNMSLGASP…PPDSNVPRAR (70 aa)) form a disordered region. The region spanning 149–226 (KFDTPHLGPR…LKRYEELHID (78 aa)) is the REM-1 2 domain. The C2 domain occupies 231–349 (GPDDDSINLP…LRRKKIEAEM (119 aa)). Positions 357 to 403 (ADRVGSRAPPPQFPMGAQSPQFAAPPTSPGSQEQNTMIPPQAPPPSQ) are disordered. The segment covering 385–394 (PGSQEQNTMI) has biased composition (polar residues). 2 consecutive Phorbol-ester/DAG-type zinc fingers follow at residues 457 to 505 (GHKF…VTKC) and 525 to 576 (PHRF…PDFC). Disordered regions lie at residues 592–622 (TQKK…SGSI) and 651–807 (SQTT…TDPG). A compositionally biased stretch (polar residues) spans 613 to 622 (SKTSISSGSI). Low complexity-rich tracts occupy residues 663–677 (TSTS…AAAA), 712–724 (SAQQ…SPQQ), and 741–765 (PQAR…MYQQ). The 260-residue stretch at 817–1076 (FNFLAVLGKG…AQEIMSQPFF (260 aa)) folds into the Protein kinase domain. ATP-binding positions include 823-831 (LGKGNFGKV) and lysine 846. The Proton acceptor role is filled by aspartate 942. In terms of domain architecture, AGC-kinase C-terminal spans 1077 to 1142 (RNINWDDIYH…RGFSYTADFE (66 aa)).

Belongs to the protein kinase superfamily. AGC Ser/Thr protein kinase family. PKC subfamily.

The enzyme catalyses L-seryl-[protein] + ATP = O-phospho-L-seryl-[protein] + ADP + H(+). It catalyses the reaction L-threonyl-[protein] + ATP = O-phospho-L-threonyl-[protein] + ADP + H(+). The protein is Protein kinase C-like of Neurospora crassa (strain ATCC 24698 / 74-OR23-1A / CBS 708.71 / DSM 1257 / FGSC 987).